The sequence spans 848 residues: Aryl hydrocarbon receptor (848 aa).

A propeptide spanning residues 1 to 9 (MSSGANITY) is cleaved from the precursor. Residues 1-38 (MSSGANITYASRKRRKPVQKTVKPIPAEGIKSNPSKRH) form a disordered region. 2 consecutive short sequence motifs (nuclear localization signal) follow at residues 12–15 (RKRR) and 36–41 (KRHRDR). One can recognise a bHLH domain in the interval 26–79 (PAEGIKSNPSKRHRDRLNTELDRLASLLPFPQDVINKLDKLSVLRLSVSYLRAK). The interval 37–65 (RHRDRLNTELDRLASLLPFPQDVINKLDK) is DNA-binding. Required for maintaining the overall integrity of the AHR:ARNT heterodimer and its transcriptional activity stretches follow at residues 49 to 81 (LASL…AKSF), 116 to 124 (LLQALNGFV), and 260 to 262 (FAI). The short motif at 63–71 (LDKLSVLRL) is the Nuclear export signal element. Residues 116–179 (LLQALNGFVL…RQLHWALNPD (64 aa)) enclose the PAS 1 domain. Residues 269-336 (PSILEIRTKN…CAESHIRMIK (68 aa)) form the PAS 2 domain. Residues 342–380 (MTVFRLFAKHSRWRWVQSNARLIYRNGRPDYIIATQRPL) form the PAC domain. Residues 421-449 (LPIRTKSNTSRKDWAPQSTPSKDSFHPSS) are disordered. A compositionally biased stretch (polar residues) spans 436–449 (PQSTPSKDSFHPSS).

As to quaternary structure, homodimer. Heterodimer; efficient DNA binding requires dimerization with another bHLH protein. Interacts with ARNT; the heterodimer ARNT:AHR binds to core DNA sequence 5'-TGCGTG-3' within the dioxin response element (DRE) of target gene promoters and activates their transcription. Binds MYBBP1A. Interacts with coactivators including SRC-1, RIP140 and NOCA7, and with the corepressor SMRT. Interacts with NEDD8 and IVNS1ABP. Interacts with BMAL1. Interacts with HSP90AB1. Interacts with TIPARP; leading to mono-ADP-ribosylation of AHR and subsequent inhibition of AHR. Post-translationally, mono-ADP-ribosylated, leading to inhibit transcription activator activity of AHR. As to expression, expressed in all tissues tested including brain, heart, kidney, liver, lung, muscle, ovary, skin, spleen and thymus.

It localises to the cytoplasm. The protein resides in the nucleus. Its function is as follows. Ligand-activated transcription factor that enables cells to adapt to changing conditions by sensing compounds from the environment, diet, microbiome and cellular metabolism, and which plays important roles in development, immunity and cancer. Upon ligand binding, translocates into the nucleus, where it heterodimerizes with ARNT and induces transcription by binding to xenobiotic response elements (XRE). Regulates a variety of biological processes, including angiogenesis, hematopoiesis, drug and lipid metabolism, cell motility and immune modulation. Xenobiotics can act as ligands: upon xenobiotic-binding, activates the expression of multiple phase I and II xenobiotic chemical metabolizing enzyme genes (such as the CYP1A1 gene). Mediates biochemical and toxic effects of halogenated aromatic hydrocarbons. Next to xenobiotics, natural ligands derived from plants, microbiota, and endogenous metabolism are potent AHR agonists. Tryptophan (Trp) derivatives constitute an important class of endogenous AHR ligands. Acts as a negative regulator of anti-tumor immunity: indoles and kynurenic acid generated by Trp catabolism act as ligand and activate AHR, thereby promoting AHR-driven cancer cell motility and suppressing adaptive immunity. Regulates the circadian clock by inhibiting the basal and circadian expression of the core circadian component PER1. Inhibits PER1 by repressing the CLOCK-BMAL1 heterodimer mediated transcriptional activation of PER1. The heterodimer ARNT:AHR binds to core DNA sequence 5'-TGCGTG-3' within the dioxin response element (DRE) of target gene promoters and activates their transcription. In Mus musculus (Mouse), this protein is Aryl hydrocarbon receptor (Ahr).